Here is a 334-residue protein sequence, read N- to C-terminus: Beta-hexosaminidase (334 aa).

Residues aspartate 60, arginine 68, arginine 133, and lysine 163–histidine 164 contribute to the substrate site. Histidine 176 (proton donor/acceptor) is an active-site residue. The active-site Nucleophile is aspartate 247.

It belongs to the glycosyl hydrolase 3 family. NagZ subfamily.

It is found in the cytoplasm. The enzyme catalyses Hydrolysis of terminal non-reducing N-acetyl-D-hexosamine residues in N-acetyl-beta-D-hexosaminides.. The protein operates within cell wall biogenesis; peptidoglycan recycling. Functionally, plays a role in peptidoglycan recycling by cleaving the terminal beta-1,4-linked N-acetylglucosamine (GlcNAc) from peptide-linked peptidoglycan fragments, giving rise to free GlcNAc, anhydro-N-acetylmuramic acid and anhydro-N-acetylmuramic acid-linked peptides. The polypeptide is Beta-hexosaminidase (Xanthomonas euvesicatoria pv. vesicatoria (strain 85-10) (Xanthomonas campestris pv. vesicatoria)).